Reading from the N-terminus, the 635-residue chain is Threonine--tRNA ligase (635 aa).

Residues 1 to 61 enclose the TGS domain; it reads MIKITLKDGS…KEDAALELLT (61 aa). The catalytic stretch occupies residues 242 to 532; the sequence is DHRKLGQELD…LTEHFAGAFP (291 aa). Positions 333, 384, and 509 each coordinate Zn(2+).

This sequence belongs to the class-II aminoacyl-tRNA synthetase family. In terms of assembly, homodimer. Requires Zn(2+) as cofactor.

It localises to the cytoplasm. The catalysed reaction is tRNA(Thr) + L-threonine + ATP = L-threonyl-tRNA(Thr) + AMP + diphosphate + H(+). Catalyzes the attachment of threonine to tRNA(Thr) in a two-step reaction: L-threonine is first activated by ATP to form Thr-AMP and then transferred to the acceptor end of tRNA(Thr). Also edits incorrectly charged L-seryl-tRNA(Thr). This Desulforamulus reducens (strain ATCC BAA-1160 / DSM 100696 / MI-1) (Desulfotomaculum reducens) protein is Threonine--tRNA ligase.